The chain runs to 137 residues: Glutamyl-tRNA(Gln) amidotransferase subunit C, chloroplastic/mitochondrial (137 aa).

The protein belongs to the GatC family. In terms of assembly, subunit of the heterotrimeric GatCAB amidotransferase (AdT) complex, composed of A, B and C subunits.

It is found in the mitochondrion. It localises to the plastid. The protein resides in the chloroplast. It carries out the reaction L-glutamyl-tRNA(Gln) + L-glutamine + ATP + H2O = L-glutaminyl-tRNA(Gln) + L-glutamate + ADP + phosphate + H(+). In terms of biological role, allows the formation of correctly charged Gln-tRNA(Gln) through the transamidation of misacylated Glu-tRNA(Gln) in chloroplasts and mitochondria. The reaction takes place in the presence of glutamine and ATP through an activated gamma-phospho-Glu-tRNA(Gln). The polypeptide is Glutamyl-tRNA(Gln) amidotransferase subunit C, chloroplastic/mitochondrial (Vitis vinifera (Grape)).